A 263-amino-acid chain; its full sequence is Putative TATA-binding protein pB263R (263 aa).

This sequence belongs to the asfivirus B263R family.

Putative TATA-binding protein. This African swine fever virus (isolate Tick/Malawi/Lil 20-1/1983) (ASFV) protein is Putative TATA-binding protein pB263R.